The chain runs to 513 residues: Maturase K (513 aa).

This sequence belongs to the intron maturase 2 family. MatK subfamily.

It is found in the plastid. It localises to the chloroplast. Its function is as follows. Usually encoded in the trnK tRNA gene intron. Probably assists in splicing its own and other chloroplast group II introns. This Phaseolus vulgaris (Kidney bean) protein is Maturase K.